Here is a 489-residue protein sequence, read N- to C-terminus: DBIRD complex subunit ZNF326 (489 aa).

Disordered stretches follow at residues 1 to 28 (MDREYGSYNQRSMDSYGNQSYSVDEMGD), 62 to 100 (EQGHFGDSYDGRYENPYRNSVDSFEGRSQGGSSWDPSFT), 133 to 181 (VGSR…RPGL), and 205 to 263 (PPFK…KNSE). Positions 7 to 22 (SYNQRSMDSYGNQSYS) are enriched in polar residues. Residues 62–76 (EQGHFGDSYDGRYEN) show a composition bias toward basic and acidic residues. A compositionally biased stretch (polar residues) spans 91–100 (GGSSWDPSFT). Positions 200-221 (KRKMAPPFKPVGVFGKKQKLSK) match the Bipartite nuclear localization signal motif. 2 consecutive C2H2 AKAP95-type zinc fingers follow at residues 273-295 (CSFCKFRSFDEKGIEEHLSSTTH) and 365-388 (CSACSVYVPALHSSVQLHLKSADH). A disordered region spans residues 431–489 (ETQPEEQQQEQEEEEEEEEQQEQAAVPEQDLSEEQPAAIAAEPEGEDFTCDPLTTTDEV). Over residues 433 to 451 (QPEEQQQEQEEEEEEEEQQ) the composition is skewed to acidic residues.

The protein belongs to the AKAP95 family. In terms of assembly, component of the DBIRD complex.

It localises to the nucleus. In terms of biological role, core component of the DBIRD complex, a multiprotein complex that acts at the interface between core mRNP particles and RNA polymerase II (RNAPII) and integrates transcript elongation with the regulation of alternative splicing. This is DBIRD complex subunit ZNF326 (znf326) from Xenopus tropicalis (Western clawed frog).